The following is a 348-amino-acid chain: Macrophage-capping protein (348 aa).

N-acetylmethionine is present on Met1. One copy of the Gelsolin-like 1 repeat lies at 27 to 75; it reads EKLKPVPVAQENQGVFFSGDSYLVLHNGPEEVSHLHLWIGQQSSRDEQG. Positions 137 to 146 match the Nuclear localization signal motif; that stretch reads KKLYQVKGKK. Gelsolin-like repeat units lie at residues 148–188 and 261–307; these read IRAT…LERN and MNLT…KERQ. Ser337 is modified (phosphoserine).

The protein belongs to the villin/gelsolin family. As to quaternary structure, interacts with NUP62. Interacts with NUTF2 and RAN; involved in CAPG nuclear import. In terms of processing, the N-terminus is blocked. In terms of tissue distribution, macrophages and macrophage-like cells.

It is found in the nucleus. Its subcellular location is the cytoplasm. The protein localises to the melanosome. The protein resides in the cell projection. It localises to the lamellipodium. It is found in the ruffle. In terms of biological role, calcium-sensitive protein which reversibly blocks the barbed ends of actin filaments but does not sever preformed actin filaments. May play an important role in macrophage function. May play a role in regulating cytoplasmic and/or nuclear structures through potential interactions with actin. May bind DNA. The polypeptide is Macrophage-capping protein (CAPG) (Homo sapiens (Human)).